The primary structure comprises 690 residues: Glutamate--cysteine ligase (690 aa).

2 stretches are compositionally biased toward low complexity: residues 574-585 (QQQNGHVNNNNN) and 598-619 (NGSTTTTNGTNSGSGITETNGT). The tract at residues 574–620 (QQQNGHVNNNNNNDKKTKNDPIIVNGSTTTTNGTNSGSGITETNGTM) is disordered.

It belongs to the glutamate--cysteine ligase type 3 family.

The catalysed reaction is L-cysteine + L-glutamate + ATP = gamma-L-glutamyl-L-cysteine + ADP + phosphate + H(+). The protein operates within sulfur metabolism; glutathione biosynthesis; glutathione from L-cysteine and L-glutamate: step 1/2. This chain is Glutamate--cysteine ligase (GCS1), found in Candida albicans (Yeast).